Consider the following 214-residue polypeptide: External core antigen (214 aa).

The first 19 residues, 1 to 19 (MQLFHLCLIISCTCPTVQA), serve as a signal peptide directing secretion. Residues 25 to 27 (GWL) form an HBEAG region. Positions 165–214 (NAPILSTLPETTVVRRRDRGRSPRRRTPSPRRRRSQSPRRRRSQSRESQC) are disordered. Basic residues predominate over residues 178–207 (VRRRDRGRSPRRRTPSPRRRRSQSPRRRRS). A 1; half-length repeat occupies 186 to 192 (SPRRRTP). The tract at residues 186–208 (SPRRRTPSPRRRRSQSPRRRRSQ) is 3 X 8 AA repeats of S-P-R-R-R-R-S-Q. Positions 186–214 (SPRRRTPSPRRRRSQSPRRRRSQSRESQC) are excised as a propeptide. A run of 2 repeats spans residues 193–200 (SPRRRRSQ) and 201–208 (SPRRRRSQ).

It belongs to the orthohepadnavirus precore antigen family. Homodimerizes. Phosphorylated. Post-translationally, cleaved by host furin.

It localises to the secreted. Its subcellular location is the host nucleus. Functionally, may regulate immune response to the intracellular capsid in acting as a T-cell tolerogen, by having an immunoregulatory effect which prevents destruction of infected cells by cytotoxic T-cells. This immune regulation may predispose to chronicity during perinatal infections and prevent severe liver injury during adult infections. In Hepatitis B virus genotype A2 subtype adw2 (isolate Germany/991/1990) (HBV-A), this protein is External core antigen.